We begin with the raw amino-acid sequence, 182 residues long: 7-carboxy-7-deazaguanine synthase (182 aa).

Residues 12–14 and arginine 27 contribute to the substrate site; that span reads LQG. The region spanning 18-182 is the Radical SAM core domain; the sequence is HTGTPAVFIR…LQTHKLIDIR (165 aa). Residues cysteine 31, cysteine 35, and cysteine 38 each contribute to the [4Fe-4S] cluster site. Mg(2+) is bound at residue threonine 40. Threonine 68 is a substrate binding site. S-adenosyl-L-methionine contacts are provided by residues glycine 70 and 111-113; that span reads SPK.

This sequence belongs to the radical SAM superfamily. 7-carboxy-7-deazaguanine synthase family. Homodimer. Requires [4Fe-4S] cluster as cofactor. It depends on S-adenosyl-L-methionine as a cofactor. Mg(2+) is required as a cofactor.

The enzyme catalyses 6-carboxy-5,6,7,8-tetrahydropterin + H(+) = 7-carboxy-7-deazaguanine + NH4(+). It participates in purine metabolism; 7-cyano-7-deazaguanine biosynthesis. In terms of biological role, catalyzes the complex heterocyclic radical-mediated conversion of 6-carboxy-5,6,7,8-tetrahydropterin (CPH4) to 7-carboxy-7-deazaguanine (CDG), a step common to the biosynthetic pathways of all 7-deazapurine-containing compounds. In Bacteroides thetaiotaomicron (strain ATCC 29148 / DSM 2079 / JCM 5827 / CCUG 10774 / NCTC 10582 / VPI-5482 / E50), this protein is 7-carboxy-7-deazaguanine synthase.